A 593-amino-acid chain; its full sequence is Regulatory protein NPR1 (593 aa).

Residues Ser11, Ser15, Ser55, and Ser59 each carry the phosphoserine modification. Positions 65 to 144 constitute a BTB domain; that stretch reads SDAKLVLSDG…VYSSRVRPPP (80 aa). The C2HC NPR-type zinc-finger motif lies at 147-161; the sequence is VSECADENCCHVACR. Zn(2+) contacts are provided by Cys150 and Cys155. The residue at position 156 (Cys156) is an S-nitrosocysteine. The Zn(2+) site is built by His157 and Cys160. ANK repeat units follow at residues 229-258, 265-295, 297-324, 328-357, and 361-397; these read KSNV…ELGL, KHVS…NLDD, CALH…DVNH, RGYT…SASE, and EGRT…CVEI. The SIM3, required fo binding to SUMO3 and subsequent sumoylation signature appears at 345-348; the sequence is ILSL. The tract at residues 387–525 is salicylic acid-binding core (SBC); that stretch reads HSLKGRLCVE…DQIMNCEDLT (139 aa). A salicylate-binding site is contributed by Arg432. Positions 537–554 match the Nuclear localization signal motif; it reads KRLQKKQRYMEIQETLKK. Residues 563–593 are disordered; the sequence is LGNSSLTDSTSSTSKSTGGKRSNRKLSHRRR. Low complexity predominate over residues 566–579; the sequence is SSLTDSTSSTSKST. The segment covering 583 to 593 has biased composition (basic residues); sequence RSNRKLSHRRR.

The protein belongs to the plant 'ANKYRIN-BTB/POZ' family. 'NPR1-like' subfamily. Homodimer. Oligomer of dimers in an uninduced quiescent state; disulfide-linked. Forms activated (i.e. sumoylated) homodimers and monomers upon systemic acquired resistance (SAR) induction. Interacts with TGA1, TGA3, TGA4, TGA5, TGA6, TGA7 and with reduced forms of TGA1 and TGA4. Activated homodimer binds two TGA3 dimers in the presence of DNA via its ANK 2 repeat (265-295), thus forming a TGA3(2)-NPR1(2)-TGA3(2) complex in which NPR1 serves as a transcription cofactor by bridging two transcription factor complexes in an enhanceosome. Interacts with NIMIN-1 and NIMIN-3 via its C-terminal region, and with NIMIN-2 via its N-terminal region. Interacts with SUMO3 but not with SUMO1 and SUMO2; this interaction is required for phosphorylation at Ser-11 and Ser-15, and triggers activation by sumoylation and subsequent degradation. Binds to NPR3 and NPR4; these interactions are promoted by association of salicylic acid (SA) with NPR3, but disrupted by SA association with NPR4, probably due to conformational changes. Binds to CUL3A, a core component of the cullin-RING ubiquitin ligases (CRL); this interaction requires NPR3 and NPR4. Interacts with NPR2 independently of SA. Binds to WRKY70 when unmodified (i.e. not sumoylated). Phosphorylation at Ser-55 and Ser-59 prevents sumoylation to ensure stability and quiescence. Post-translationally, phosphorylated at Ser-11 and Ser-15 in the nucleus; facilitates its recruitment to a cullin3-based ubiquitin ligase leading to polyubiquitination and subsequent CUL3/CSN-mediated degradation. This phosphorylation at Ser-11 and Ser-15 requires interaction with SUMO3, and promotes in turn activation by sumoylation and subsequent degradation. In terms of processing, ubiquitinated. Sumoylated by SUMO3 independently of an E3 ligase to activate defense gene expression by switching from association with WRKY transcriptional repressors (e.g. WRKY70) to TGA transcriptional activators (e.g. TGA3). Sumoylation is inhibited by phosphorylation at Ser-55 and Ser-59, but seems to promote phosphorylation at Ser-11 and Ser-15. Sumoylation also triggers degradation, making immune induction transient. Post-translationally, the Cys-82-SH group reacts with Cys-216-SH of the other subunit to form an intermolecular disulfide. This disulfide might subsequently be reduced upon systemic acquired resistance (SAR) induction. In terms of processing, S-nitrosylation at Cys-156 facilitates its oligomerization.

Its subcellular location is the cytoplasm. The protein resides in the nucleus. The protein localises to the nuclear body. Its pathway is protein modification; protein ubiquitination. In terms of biological role, salicylic acid (SA)-binding substrate-specific adapter of an E3 ubiquitin-protein ligase complex (CUL3-RBX1-BTB) which mediates the ubiquitination and subsequent proteasomal degradation of target proteins. Transcription cofactor that represses gene expression in the absence of salicylic acid (SA), when attached to negative cis-elements (W-box) with WRKY transcription factors (e.g. WRKY70), but stimulates gene expression upon activation by SA, when sumoylated and attached to positive cis-elements (as-1) with TGA transcription factors (e.g. TGA3), thus confering immunity through a series of gene regulations ending in a significant increase in antimicrobial and defense genes expression (e.g. PR-1 and PR-2). Binds to SA with low capacity; this leads to conformational changes. Key positive regulator of the SA-dependent signaling pathway that negatively regulates jasmonic acid (JA)-dependent signaling pathway. Controls the onset of systemic acquired resistance (SAR). Upon SAR induction, a biphasic change in cellular reduction potential occurs, resulting in reduction of the cytoplasmic oligomeric form to dimeric and monomeric forms, which accumulate in the nucleus and activate gene expression. Appears to control lesion expansion by acting as an inhibitor of programmed cell death (PCD) during effector-triggered immunity (ETI) that occurs in response to incompatible interaction with avirulent pathogenic bacteria (i.e. Pseudomonas syringae ES4326/avrRpt2) ending in a hypersensitive response (HR). Phosphorylated form is target of proteasome degradation. This is Regulatory protein NPR1 from Arabidopsis thaliana (Mouse-ear cress).